We begin with the raw amino-acid sequence, 719 residues long: Ribosomal RNA large subunit methyltransferase K/L (719 aa).

The region spanning 43 to 154 (TQYRVLLWTR…REELVISLDL (112 aa)) is the THUMP domain.

The protein belongs to the methyltransferase superfamily. RlmKL family.

Its subcellular location is the cytoplasm. The enzyme catalyses guanosine(2445) in 23S rRNA + S-adenosyl-L-methionine = N(2)-methylguanosine(2445) in 23S rRNA + S-adenosyl-L-homocysteine + H(+). The catalysed reaction is guanosine(2069) in 23S rRNA + S-adenosyl-L-methionine = N(2)-methylguanosine(2069) in 23S rRNA + S-adenosyl-L-homocysteine + H(+). Functionally, specifically methylates the guanine in position 2445 (m2G2445) and the guanine in position 2069 (m7G2069) of 23S rRNA. The polypeptide is Ribosomal RNA large subunit methyltransferase K/L (Pasteurella multocida (strain Pm70)).